The sequence spans 214 residues: Holliday junction branch migration complex subunit RuvA (214 aa).

The interval 1-64 is domain I; that stretch reads MITRIRGEML…EDAMTLYGFT (64 aa). The interval 65–143 is domain II; that stretch reads SGEQLAVFEL…DITSKDAYQD (79 aa). Residues 144 to 160 are flexible linker; the sequence is ISASEKLDNTGEKLGIS. Residues 161 to 214 are domain III; the sequence is TRHKHLDELKAALSSLGYTNREIEKTVDAIQGQITEGQDMEELLRLALQKLNTK.

The protein belongs to the RuvA family. As to quaternary structure, homotetramer. Forms an RuvA(8)-RuvB(12)-Holliday junction (HJ) complex. HJ DNA is sandwiched between 2 RuvA tetramers; dsDNA enters through RuvA and exits via RuvB. An RuvB hexamer assembles on each DNA strand where it exits the tetramer. Each RuvB hexamer is contacted by two RuvA subunits (via domain III) on 2 adjacent RuvB subunits; this complex drives branch migration. In the full resolvosome a probable DNA-RuvA(4)-RuvB(12)-RuvC(2) complex forms which resolves the HJ.

Its subcellular location is the cytoplasm. In terms of biological role, the RuvA-RuvB-RuvC complex processes Holliday junction (HJ) DNA during genetic recombination and DNA repair, while the RuvA-RuvB complex plays an important role in the rescue of blocked DNA replication forks via replication fork reversal (RFR). RuvA specifically binds to HJ cruciform DNA, conferring on it an open structure. The RuvB hexamer acts as an ATP-dependent pump, pulling dsDNA into and through the RuvAB complex. HJ branch migration allows RuvC to scan DNA until it finds its consensus sequence, where it cleaves and resolves the cruciform DNA. The sequence is that of Holliday junction branch migration complex subunit RuvA from Natranaerobius thermophilus (strain ATCC BAA-1301 / DSM 18059 / JW/NM-WN-LF).